The sequence spans 300 residues: 4-hydroxy-tetrahydrodipicolinate synthase (300 aa).

Position 46 (Thr46) interacts with pyruvate. Tyr135 functions as the Proton donor/acceptor in the catalytic mechanism. The active-site Schiff-base intermediate with substrate is the Lys163. A pyruvate-binding site is contributed by Val205.

Belongs to the DapA family. In terms of assembly, homotetramer; dimer of dimers.

It is found in the cytoplasm. It catalyses the reaction L-aspartate 4-semialdehyde + pyruvate = (2S,4S)-4-hydroxy-2,3,4,5-tetrahydrodipicolinate + H2O + H(+). Its pathway is amino-acid biosynthesis; L-lysine biosynthesis via DAP pathway; (S)-tetrahydrodipicolinate from L-aspartate: step 3/4. Its function is as follows. Catalyzes the condensation of (S)-aspartate-beta-semialdehyde [(S)-ASA] and pyruvate to 4-hydroxy-tetrahydrodipicolinate (HTPA). In Koribacter versatilis (strain Ellin345), this protein is 4-hydroxy-tetrahydrodipicolinate synthase.